A 486-amino-acid chain; its full sequence is Protein DETOXIFICATION 53 (486 aa).

Helical transmembrane passes span 15–35, 45–65, 94–114, 130–150, 159–179, 187–207, 240–260, 267–287, 312–332, 346–366, 386–406, and 413–433; these read CPIVMTSLLIFSRSIISMWFL, GGALAMGFGNITGVSVLKGLS, LLIVVSVPIAVTWLNIEPIFL, MLFFVPELLAQAMLHPLRTFL, LTISAIVSILLHPLFNYVFVV, GVAIAMAFNTMNIDVGLLVYT, AISVCLEYWWYEIMLFLCGLL, VAAMGILIQTTGILYVVPFAI, VIGLILAVAYGLAAAVFVTAL, ILGLISAALPILGLCEIGNSP, VNLCAFYIVGLPVAVTTTFGF, and LWFGLLSAQMTCLVMMLYTLI. Positions 448-474 are disordered; sequence TSAAADKSHSEDETVHAEVQDDDDVSS. Over residues 453–466 the composition is skewed to basic and acidic residues; sequence DKSHSEDETVHAEV.

It belongs to the multi antimicrobial extrusion (MATE) (TC 2.A.66.1) family.

It localises to the membrane. This Arabidopsis thaliana (Mouse-ear cress) protein is Protein DETOXIFICATION 53.